A 520-amino-acid polypeptide reads, in one-letter code: Transactivator/viroplasmin protein (520 aa).

A disordered region spans residues 486-520 (VQDASADSGPKDGPPPTRSIVEKEDVPTTSSKQVD).

The protein belongs to the caulimoviridae viroplasmin family.

It localises to the host cytoplasm. In terms of biological role, enhances the ribosomal termination-reinitiation event leading to the translation of major open reading frames on the polycistronic viral RNAs. The protein is Transactivator/viroplasmin protein of Cauliflower mosaic virus (strain BBC) (CaMV).